Consider the following 96-residue polypeptide: Early E1A 11 kDa protein (96 aa).

2 disordered regions span residues 1–29 and 72–96; these read MNSR…QDQQ and LAQG…EESD. Acidic residues predominate over residues 75–96; that stretch reads GEEEEEEEDGAEDIEENGEESD.

The chain is Early E1A 11 kDa protein from Murine adenovirus A serotype 1 (MAdV-1).